A 208-amino-acid polypeptide reads, in one-letter code: Thymidylate kinase (208 aa).

ATP is bound at residue Gly-11 to Ser-18.

This sequence belongs to the thymidylate kinase family.

The catalysed reaction is dTMP + ATP = dTDP + ADP. Functionally, phosphorylation of dTMP to form dTDP in both de novo and salvage pathways of dTTP synthesis. The chain is Thymidylate kinase from Methylococcus capsulatus (strain ATCC 33009 / NCIMB 11132 / Bath).